We begin with the raw amino-acid sequence, 394 residues long: Lipase 3 (394 aa).

The signal sequence occupies residues 1–20 (MTRGALKVTILLVGLGLVLA). Asparagine 131 is a glycosylation site (N-linked (GlcNAc...) asparagine). Residues serine 164 and histidine 369 each act as charge relay system in the active site.

This sequence belongs to the AB hydrolase superfamily. Lipase family. In terms of tissue distribution, fat body.

This is Lipase 3 (Lip3) from Drosophila melanogaster (Fruit fly).